A 212-amino-acid chain; its full sequence is Large ribosomal subunit protein uL1 (212 aa).

This sequence belongs to the universal ribosomal protein uL1 family. Part of the 50S ribosomal subunit.

Functionally, binds directly to 23S rRNA. Probably involved in E site tRNA release. Protein L1 is also a translational repressor protein, it controls the translation of its operon by binding to its mRNA. In Methanothermobacter thermautotrophicus (strain ATCC 29096 / DSM 1053 / JCM 10044 / NBRC 100330 / Delta H) (Methanobacterium thermoautotrophicum), this protein is Large ribosomal subunit protein uL1.